The primary structure comprises 295 residues: 4-hydroxybenzoate octaprenyltransferase (295 aa).

A run of 8 helical transmembrane segments spans residues 28 to 48 (PIGIYLLLWPTLWAVWIAADG), 55 to 75 (VLIFTCGVILMRSAGCVINDF), 103 to 123 (WALFAVLVALSFGLVLLTDPF), 147 to 167 (LPQLVLGAAYSWGIPMAFTAA), 175 to 195 (AWLIFAANLAWTVAYDTYYAM), 219 to 239 (AIILALQGLTLGLLLVVGMRL), 241 to 261 (LGPYFHLGLLVAALCFAWEFV), and 275 to 295 (FLHNHWAGLAILVGLILDYGI).

This sequence belongs to the UbiA prenyltransferase family. Requires Mg(2+) as cofactor.

The protein localises to the cell inner membrane. The catalysed reaction is all-trans-octaprenyl diphosphate + 4-hydroxybenzoate = 4-hydroxy-3-(all-trans-octaprenyl)benzoate + diphosphate. It functions in the pathway cofactor biosynthesis; ubiquinone biosynthesis. Its function is as follows. Catalyzes the prenylation of para-hydroxybenzoate (PHB) with an all-trans polyprenyl group. Mediates the second step in the final reaction sequence of ubiquinone-8 (UQ-8) biosynthesis, which is the condensation of the polyisoprenoid side chain with PHB, generating the first membrane-bound Q intermediate 3-octaprenyl-4-hydroxybenzoate. The protein is 4-hydroxybenzoate octaprenyltransferase of Azotobacter vinelandii (strain DJ / ATCC BAA-1303).